Consider the following 328-residue polypeptide: Glucan endo-1,3-beta-glucosidase, basic isoform 3 (328 aa).

Glu-85 acts as the Proton donor in catalysis. The active-site Nucleophile is Glu-230. Residues 306–328 constitute a propeptide, removed in mature form; the sequence is VSERVWDISAETNSTTSSLISEM. Residue Asn-318 is glycosylated (N-linked (GlcNAc...) asparagine).

This sequence belongs to the glycosyl hydrolase 17 family.

The protein resides in the vacuole. The enzyme catalyses Hydrolysis of (1-&gt;3)-beta-D-glucosidic linkages in (1-&gt;3)-beta-D-glucans.. Is thought to be an important plant defense-related product against fungal pathogens. This is Glucan endo-1,3-beta-glucosidase, basic isoform 3 (GLUB3) from Solanum tuberosum (Potato).